The sequence spans 1154 residues: Large proline-rich protein BAG6 (1154 aa).

Met1 carries the N-acetylmethionine modification. Residues 17-92 (LEVLVKTLDS…HLVERAPPQT (76 aa)) enclose the Ubiquitin-like domain. Disordered regions lie at residues 87 to 125 (RAPPQTQLPSGASSGTGSASATHGGAPLPGTRGPGASVH), 186 to 274 (RGGT…HPSP), 387 to 442 (TMTG…SSHP), 463 to 531 (QDSG…QGAG), and 568 to 626 (AQAQ…SAAD). Phosphoserine is present on Ser96. Residues 96 to 112 (SGASSGTGSASATHGGA) are compositionally biased toward low complexity. Thr117 is modified (phosphothreonine). Positions 209–218 (VALNSQTSEP) are enriched in polar residues. Repeat unit 1 spans residues 237–271 (RPPTQTPELAPSGPAPAGPAPAGPAPAPETNAPNH). A 4 X 29 AA approximate repeats region spans residues 237–658 (RPPTQTPELA…MASPTITVAM (422 aa)). Over residues 249–263 (GPAPAGPAPAGPAPA) the composition is skewed to pro residues. Over residues 400–409 (GAEAATPGSA) the composition is skewed to low complexity. Over residues 410-426 (QATSLPPSSTTVDSSTE) the composition is skewed to polar residues. Repeat unit 2 spans residues 416–444 (PSSTTVDSSTEGAPPPGPAPPPASSHPRV). Composition is skewed to pro residues over residues 428 to 439 (APPPGPAPPPAS) and 508 to 521 (PTPPQARPSHPGGP). Low complexity-rich tracts occupy residues 568–581 (AQAQAQAQAQAQAP) and 591–609 (PATASASAGTTNTATTAGP). 2 tandem repeats follow at residues 597-624 (SAGTTNTATTAGPAPGGPAQPPPPQPSA) and 630-658 (SQLLGNLLGPAGPGAGGPGMASPTITVAM). Residues 611–622 (PGGPAQPPPPQP) are compositionally biased toward pro residues. Disordered stretches follow at residues 673-719 (QASQ…ESLP) and 968-1154 (PPQT…ADDP). Positions 678–702 (APPPPPPPPPPPPAPEQQSTPPPGS) are enriched in pro residues. 2 positions are modified to phosphoserine: Ser986 and Ser995. Over residues 1029–1042 (AEPWAAAVPPEWVP) the composition is skewed to low complexity. The required for interaction with GET4 stretch occupies residues 1032-1062 (WAAAVPPEWVPIIQQDIQSQRKVKPQPPLSD). The short motif at 1034–1076 (AAVPPEWVPIIQQDIQSQRKVKPQPPLSDAYLSGMPAKRRKTM) is the Nuclear localization site element. Residues 1044–1154 (IQQDIQSQRK…NAHRAFADDP (111 aa)) form a sufficient for the delivery of client proteins to the endoplasmic reticulum region. Position 1075 is a phosphothreonine (Thr1075). The tract at residues 1080-1137 (GPQLLLSEAVSRAAKAAGARPLTSPESLSRDLEAPEVQESYRQQLRSDIQKRLQEDPN) is BAG-similar domain, required and sufficient for interaction with UBL4A. Low complexity predominate over residues 1088 to 1098 (AVSRAAKAAGA). Residues Ser1103 and Ser1139 each carry the phosphoserine modification.

As to quaternary structure, component of the BAG6/BAT3 complex, also named BAT3 complex, at least composed of BAG6, UBL4A and GET4/TRC35. Interacts with GET4; the interaction is direct and localizes BAG6 in the cytosol. Interacts with UBL4A; the interaction is direct and required for UBL4A protein stability. Interacts with AIFM1. Interacts with HSPA2. Interacts with CTCFL. Interacts with p300/EP300. Interacts (via ubiquitin-like domain) with RNF126; required for BAG6-dependent ubiquitination of proteins mislocalized to the cytosol. Interacts (via ubiquitin-like domain) with SGTA; SGTA competes with RNF126 by binding the same region of BAG6, thereby promoting deubiquitination of BAG6-target proteins and rescuing them from degradation. Interacts with ricin A chain. Interacts with VCP and AMFR; both form the VCP/p97-AMFR/gp78 complex. Interacts with SYVN1. Interacts with USP13; the interaction is direct and may mediate UBL4A deubiquitination. Interacts with ZFAND2B. Interacts with KPNA2. Interacts with UBQLN4. Ricin can induce a cleavage by the caspase CASP3. The released C-terminal peptide induces apoptosis.

The protein resides in the cytoplasm. Its subcellular location is the cytosol. It localises to the nucleus. It is found in the secreted. The protein localises to the extracellular exosome. In terms of biological role, ATP-independent molecular chaperone preventing the aggregation of misfolded and hydrophobic patches-containing proteins. Functions as part of a cytosolic protein quality control complex, the BAG6/BAT3 complex, which maintains these client proteins in a soluble state and participates in their proper delivery to the endoplasmic reticulum or alternatively can promote their sorting to the proteasome where they undergo degradation. The BAG6/BAT3 complex is involved in the post-translational delivery of tail-anchored/type II transmembrane proteins to the endoplasmic reticulum membrane. Recruited to ribosomes, it interacts with the transmembrane region of newly synthesized tail-anchored proteins and together with SGTA and ASNA1 mediates their delivery to the endoplasmic reticulum. Client proteins that cannot be properly delivered to the endoplasmic reticulum are ubiquitinated by RNF126, an E3 ubiquitin-protein ligase associated with BAG6 and are sorted to the proteasome. SGTA which prevents the recruitment of RNF126 to BAG6 may negatively regulate the ubiquitination and the proteasomal degradation of client proteins. Similarly, the BAG6/BAT3 complex also functions as a sorting platform for proteins of the secretory pathway that are mislocalized to the cytosol either delivering them to the proteasome for degradation or to the endoplasmic reticulum. The BAG6/BAT3 complex also plays a role in the endoplasmic reticulum-associated degradation (ERAD), a quality control mechanism that eliminates unwanted proteins of the endoplasmic reticulum through their retrotranslocation to the cytosol and their targeting to the proteasome. It maintains these retrotranslocated proteins in an unfolded yet soluble state condition in the cytosol to ensure their proper delivery to the proteasome. BAG6 is also required for selective ubiquitin-mediated degradation of defective nascent chain polypeptides by the proteasome. In this context, it may participate in the production of antigenic peptides and play a role in antigen presentation in immune response. BAG6 is also involved in endoplasmic reticulum stress-induced pre-emptive quality control, a mechanism that selectively attenuates the translocation of newly synthesized proteins into the endoplasmic reticulum and reroutes them to the cytosol for proteasomal degradation. BAG6 may ensure the proper degradation of these proteins and thereby protects the endoplasmic reticulum from protein overload upon stress. By inhibiting the polyubiquitination and subsequent proteasomal degradation of HSPA2 it may also play a role in the assembly of the synaptonemal complex during spermatogenesis. Also positively regulates apoptosis by interacting with and stabilizing the proapoptotic factor AIFM1. By controlling the steady-state expression of the IGF1R receptor, indirectly regulates the insulin-like growth factor receptor signaling pathway. Functionally, involved in DNA damage-induced apoptosis: following DNA damage, accumulates in the nucleus and forms a complex with p300/EP300, enhancing p300/EP300-mediated p53/TP53 acetylation leading to increase p53/TP53 transcriptional activity. When nuclear, may also act as a component of some chromatin regulator complex that regulates histone 3 'Lys-4' dimethylation (H3K4me2). Released extracellularly via exosomes, it is a ligand of the natural killer/NK cells receptor NCR3 and stimulates NK cells cytotoxicity. It may thereby trigger NK cells cytotoxicity against neighboring tumor cells and immature myeloid dendritic cells (DC). Its function is as follows. May mediate ricin-induced apoptosis. This is Large proline-rich protein BAG6 from Mus musculus (Mouse).